Reading from the N-terminus, the 852-residue chain is Carbohydrate-responsive element-binding protein (852 aa).

Low complexity predominate over residues 1-12 (MAGALAGLAAGL). 2 disordered regions span residues 1 to 36 (MAGA…SLRR) and 54 to 80 (VSSP…FGPR). A phosphoserine mark is found at serine 20, serine 23, and serine 25. Position 27 is a phosphothreonine (threonine 27). Serine 29 carries the post-translational modification Phosphoserine. Serine 196 is modified (phosphoserine). Disordered stretches follow at residues 328–365 (DSLF…CPGP), 486–527 (PCFS…NNPC), and 548–648 (STLL…NKTE). Low complexity predominate over residues 505-521 (ASPPTLAPATASPPTTA). Over residues 548–559 (STLLRSPGSPQE) the composition is skewed to polar residues. Serine 556 carries the post-translational modification Phosphoserine; by AMPK. The segment covering 568 to 584 (FLPPTPAPTPPRPPPGP) has biased composition (pro residues). Phosphoserine occurs at positions 602, 614, and 631. Positions 649–703 (NRRITHISAEQKRRFNIKLGFDTLHGLVSTLSAQPSLKVSKATTLQKTAEYILML) constitute a bHLH domain. A leucine-zipper region spans residues 703 to 724 (LQQERAGLQEEAQQLRDEIEEL).

In terms of assembly, binds DNA as a heterodimer with MLX/TCFL4. Phosphorylation at Ser-556 by AMPK inactivates the DNA-binding activity. In terms of tissue distribution, expressed in liver, heart, kidney, cerebellum and intestinal tissues.

The protein localises to the nucleus. Functionally, binds DNA as a heterodimer with MLX/TCFL4 and activates transcription. Binds to the canonical E box sequence 5'-CACGTG-3'. Plays a role in transcriptional activation of glycolytic target genes. Involved in glucose-responsive gene regulation. Regulates transcription in response to changes in cellular carbohydrate abundance such as occurs during fasting to feeding metabolic transition. Refeeding stimulates MLXIPL/ChREBP transcription factor, leading to increased BCKDK to PPM1K expression ratio, phosphorylation and activation of ACLY that ultimately results in the generation of malonyl-CoA and oxaloacetate immediate substrates of de novo lipogenesis and gluconeogenesis, respectively. This chain is Carbohydrate-responsive element-binding protein (MLXIPL), found in Homo sapiens (Human).